The sequence spans 471 residues: 5-hydroxytryptamine receptor 2A (471 aa).

At 1 to 80 the chain is on the extracellular side; sequence MEILCEDNIS…LQEKNWSALL (80 aa). N-linked (GlcNAc...) asparagine glycosylation is found at N8, N38, N44, N51, and N54. The chain crosses the membrane as a helical span at residues 81–97; that stretch reads TTVVIILTIAGNILVIM. At 98–111 the chain is on the cytoplasmic side; it reads AVSLEKKLQNATNY. Residues 112–137 form a helical membrane-spanning segment; sequence FLMSLAIADMLLGFLVMPVSMLTILY. At 138 to 146 the chain is on the extracellular side; sequence GYRWPLPSK. A helical transmembrane segment spans residues 147–171; sequence LCAVWIYLDVLFSTASIMHLCAISL. A disulfide bridge links C148 with C227. D155 serves as a coordination point for serotonin. Positions 172-174 match the DRY motif; important for ligand-induced conformation changes motif; that stretch reads DRY. Residues 172–191 are Cytoplasmic-facing; sequence DRYVAIQNPIHHSRFNSRTK. A helical membrane pass occupies residues 192–215; sequence AFLKIIAVWTISVGISMPIPVFGL. Topologically, residues 216–232 are extracellular; the sequence is QDDSKVFKEGSCLLADD. Residues 233–258 form a helical membrane-spanning segment; that stretch reads NFVLIGSFVAFFIPLTIMVITYFLTI. Residues 259 to 322 lie on the Cytoplasmic side of the membrane; it reads KSLQKEATLC…QSISNEQKAC (64 aa). Position 280 is a phosphoserine (S280). The chain crosses the membrane as a helical span at residues 323-348; the sequence is KVLGIVFFLFVVMWCPFFITNIMAVI. Position 343 (N343) interacts with serotonin. C349 and C353 are joined by a disulfide. The Extracellular portion of the chain corresponds to 349–356; the sequence is CKESCNEN. A helical membrane pass occupies residues 357-382; the sequence is VIGALLNVFVWIGYLSSAVNPLVYTL. The NPxxY motif; important for ligand-induced conformation changes and signaling motif lies at 376–380; the sequence is NPLVY. The Cytoplasmic segment spans residues 383–471; that stretch reads FNKTYRSAFS…ETVNEKVSCV (89 aa). The PDZ-binding signature appears at 469-471; sequence SCV.

Belongs to the G-protein coupled receptor 1 family. As to quaternary structure, interacts (via C-terminus) with MPDZ and PATJ. May interact (via C-terminus) with MPP3, PRDX6, DLG4, DLG1, CASK, APBA1 and MAGI2. Interacts with GRM2 and DRD2; this may affect signaling. Detected in neurons in brain cortex. Detected in adult intestine, especially in mucosal epithelium, longitudinal and circular layers of muscularis externa and myenteric plexuses. Highly expressed in Paneth cells, and detected at lower levels in enterocytes (at protein level). Detected in neurons in the brain cortex.

The protein localises to the cell membrane. It is found in the cell projection. The protein resides in the dendrite. It localises to the axon. Its subcellular location is the cytoplasmic vesicle. The protein localises to the membrane. It is found in the caveola. The protein resides in the presynapse. With respect to regulation, G-protein coupled receptor activity is regulated by lipids: oleamide increases HTR2A-mediated activity. Its function is as follows. G-protein coupled receptor for 5-hydroxytryptamine (serotonin). Also functions as a receptor for various drugs and psychoactive substances, including mescaline, psilocybin, 1-(2,5-dimethoxy-4-iodophenyl)-2-aminopropane (DOI) and lysergic acid diethylamide (LSD). Ligand binding causes a conformation change that triggers signaling via guanine nucleotide-binding proteins (G proteins) and modulates the activity of downstream effectors. HTR2A is coupled to G(q)/G(11) G alpha proteins and activates phospholipase C-beta, releasing diacylglycerol (DAG) and inositol 1,4,5-trisphosphate (IP3) second messengers that modulate the activity of phosphatidylinositol 3-kinase and promote the release of Ca(2+) ions from intracellular stores, respectively. Beta-arrestin family members inhibit signaling via G proteins and mediate activation of alternative signaling pathways. Affects neural activity, perception, cognition and mood. Plays a role in the regulation of behavior, including responses to anxiogenic situations and psychoactive substances. Plays a role in intestinal smooth muscle contraction, and may play a role in arterial vasoconstriction. This Mus musculus (Mouse) protein is 5-hydroxytryptamine receptor 2A (Htr2a).